We begin with the raw amino-acid sequence, 107 residues long: Large ribosomal subunit protein uL24 (107 aa).

Belongs to the universal ribosomal protein uL24 family. In terms of assembly, part of the 50S ribosomal subunit.

In terms of biological role, one of two assembly initiator proteins, it binds directly to the 5'-end of the 23S rRNA, where it nucleates assembly of the 50S subunit. Its function is as follows. One of the proteins that surrounds the polypeptide exit tunnel on the outside of the subunit. The protein is Large ribosomal subunit protein uL24 of Thermotoga neapolitana (strain ATCC 49049 / DSM 4359 / NBRC 107923 / NS-E).